Here is a 534-residue protein sequence, read N- to C-terminus: Apolipoprotein N-acyltransferase (534 aa).

Helical transmembrane passes span 18–38 (LLAIAAGAFAVLALPPFGFFA), 39–59 (AMFLSFTLLVWLIDGAAASPD), 74–94 (WLFGFGYFVAGLWWLGHALLV), 105–125 (LAILGLPACLAIFYGLAVALA), 127–147 (IFWSDGMGRIAALAAGFGLME), 178–198 (VIGAMGVTALAVFVFSAPALA), and 209–229 (ALAVLLFAAHLGYGAYALYVA). Residues 246 to 496 (VQPDIDQAAK…TGFIDATVDR (251 aa)) enclose the CN hydrolase domain. Catalysis depends on E291, which acts as the Proton acceptor. K355 is a catalytic residue. C408 serves as the catalytic Nucleophile. A helical transmembrane segment spans residues 504 to 524 (TFPRQTYFWLTEALLILIALV).

It belongs to the CN hydrolase family. Apolipoprotein N-acyltransferase subfamily.

The protein localises to the cell inner membrane. The enzyme catalyses N-terminal S-1,2-diacyl-sn-glyceryl-L-cysteinyl-[lipoprotein] + a glycerophospholipid = N-acyl-S-1,2-diacyl-sn-glyceryl-L-cysteinyl-[lipoprotein] + a 2-acyl-sn-glycero-3-phospholipid + H(+). The protein operates within protein modification; lipoprotein biosynthesis (N-acyl transfer). Its function is as follows. Catalyzes the phospholipid dependent N-acylation of the N-terminal cysteine of apolipoprotein, the last step in lipoprotein maturation. In Rhizobium leguminosarum bv. trifolii (strain WSM2304), this protein is Apolipoprotein N-acyltransferase.